The following is a 289-amino-acid chain: 3-methyl-2-oxobutanoate hydroxymethyltransferase (289 aa).

The Mg(2+) site is built by Asp-58 and Asp-99. 3-methyl-2-oxobutanoate contacts are provided by residues 58–59, Asp-99, and Lys-128; that span reads DS. Position 130 (Glu-130) interacts with Mg(2+). Glu-197 (proton acceptor) is an active-site residue.

Belongs to the PanB family. In terms of assembly, homodecamer; pentamer of dimers. It depends on Mg(2+) as a cofactor.

It is found in the cytoplasm. The catalysed reaction is 3-methyl-2-oxobutanoate + (6R)-5,10-methylene-5,6,7,8-tetrahydrofolate + H2O = 2-dehydropantoate + (6S)-5,6,7,8-tetrahydrofolate. Its pathway is cofactor biosynthesis; (R)-pantothenate biosynthesis; (R)-pantoate from 3-methyl-2-oxobutanoate: step 1/2. Functionally, catalyzes the reversible reaction in which hydroxymethyl group from 5,10-methylenetetrahydrofolate is transferred onto alpha-ketoisovalerate to form ketopantoate. The sequence is that of 3-methyl-2-oxobutanoate hydroxymethyltransferase from Leptothrix cholodnii (strain ATCC 51168 / LMG 8142 / SP-6) (Leptothrix discophora (strain SP-6)).